We begin with the raw amino-acid sequence, 217 residues long: Neurotrophic factor BDNF precursor form (217 aa).

Positions 1 to 108 (PMKEVSIRGQ…AANMSMRVRR (108 aa)) are excised as a propeptide. N101 is a glycosylation site (N-linked (GlcNAc...) asparagine). Intrachain disulfides connect C121/C188 and C166/C217.

It belongs to the NGF-beta family.

It is found in the secreted. Its function is as follows. Promotes the survival of neuronal populations that are all located either in the central nervous system or directly connected to it. This Acrantophis dumerili (Dumeril's ground boa) protein is Neurotrophic factor BDNF precursor form (BDNF).